Reading from the N-terminus, the 351-residue chain is Heat-inducible transcription repressor HrcA (351 aa).

This sequence belongs to the HrcA family.

Its function is as follows. Negative regulator of class I heat shock genes (grpE-dnaK-dnaJ and groELS operons). Prevents heat-shock induction of these operons. This is Heat-inducible transcription repressor HrcA from Clostridium tetani (strain Massachusetts / E88).